The sequence spans 157 residues: MGSEILVGIGEFRVAKGAVLKTIGLGSCVGIALYDPKLRLGGLAHVMLPQSGNGTKRSAKYADHAVEMMTEAMERLGSDRKRIVAKMAGGAQIFKHMTMDMLRIGDRNAEAIRTILRDYGIRIVSEDLGGDEGRTVYFFTNDGRMLVKYSRGGELWI.

The protein belongs to the CheD family.

The catalysed reaction is L-glutaminyl-[protein] + H2O = L-glutamyl-[protein] + NH4(+). Functionally, probably deamidates glutamine residues to glutamate on methyl-accepting chemotaxis receptors (MCPs), playing an important role in chemotaxis. The protein is Probable chemoreceptor glutamine deamidase CheD of Archaeoglobus fulgidus (strain ATCC 49558 / DSM 4304 / JCM 9628 / NBRC 100126 / VC-16).